A 611-amino-acid polypeptide reads, in one-letter code: Solute carrier family 23 member 3 (611 aa).

Topologically, residues methionine 1–cysteine 52 are cytoplasmic. A helical transmembrane segment spans residues leucine 53–leucine 73. The Extracellular portion of the chain corresponds to leucine 74–glutamine 88. The helical transmembrane segment at leucine 89–serine 109 threads the bilayer. Residues arginine 110–glutamate 168 lie on the Cytoplasmic side of the membrane. The chain crosses the membrane as a helical span at residues valine 169–proline 189. Residues glycine 190–arginine 191 are Extracellular-facing. A helical membrane pass occupies residues valine 192–alanine 212. At histidine 213–glutamate 215 the chain is on the cytoplasmic side. Residues valine 216 to valine 236 form a helical membrane-spanning segment. Residues cysteine 237–serine 269 lie on the Extracellular side of the membrane. The helical transmembrane segment at valine 270–proline 290 threads the bilayer. Over leucine 291–alanine 319 the chain is Cytoplasmic. The helical transmembrane segment at leucine 320–leucine 340 threads the bilayer. Residues cysteine 341–glycine 358 lie on the Extracellular side of the membrane. A helical membrane pass occupies residues leucine 359–alanine 379. Residues serine 380–arginine 397 lie on the Cytoplasmic side of the membrane. Residues valine 398 to glutamine 417 form a helical membrane-spanning segment. Over leucine 418 to valine 426 the chain is Extracellular. A helical membrane pass occupies residues leucine 427 to alanine 449. The Cytoplasmic segment spans residues aspartate 450 to arginine 455. A helical membrane pass occupies residues asparagine 456–arginine 475. Over glutamate 476–aspartate 489 the chain is Extracellular. Residues methionine 490–leucine 510 traverse the membrane as a helical segment. Topologically, residues glutamate 511–glutamine 611 are cytoplasmic. The segment at proline 574 to glutamine 611 is disordered. Residues serine 596–arginine 605 are compositionally biased toward polar residues.

Belongs to the nucleobase:cation symporter-2 (NCS2) (TC 2.A.40) family.

It is found in the membrane. Its subcellular location is the cytoplasm. It catalyses the reaction hypoxanthine(out) + Na(+)(out) = hypoxanthine(in) + Na(+)(in). Acts as a sodium-dependent hypoxanthine transporter. May show xanthine-hypoxanthine exchange activity. The chain is Solute carrier family 23 member 3 (Slc23a3) from Mus musculus (Mouse).